Here is a 122-residue protein sequence, read N- to C-terminus: Ribonuclease P protein component 1 (122 aa).

The protein belongs to the eukaryotic/archaeal RNase P protein component 1 family. Consists of a catalytic RNA component and at least 4-5 protein subunits.

The protein localises to the cytoplasm. The enzyme catalyses Endonucleolytic cleavage of RNA, removing 5'-extranucleotides from tRNA precursor.. Its function is as follows. Part of ribonuclease P, a protein complex that generates mature tRNA molecules by cleaving their 5'-ends. This is Ribonuclease P protein component 1 from Thermococcus sibiricus (strain DSM 12597 / MM 739).